The primary structure comprises 342 residues: tRNA-specific 2-thiouridylase MnmA (342 aa).

ATP contacts are provided by residues 6–13 (LLSGGVDS) and leucine 32. Cysteine 92 serves as the catalytic Nucleophile. Residues cysteine 92 and cysteine 191 are joined by a disulfide bond. Glycine 116 is an ATP binding site. The interaction with tRNA stretch occupies residues 138–140 (KDQ). Catalysis depends on cysteine 191, which acts as the Cysteine persulfide intermediate. The interaction with tRNA stretch occupies residues 293-294 (RY).

The protein belongs to the MnmA/TRMU family.

It localises to the cytoplasm. The enzyme catalyses S-sulfanyl-L-cysteinyl-[protein] + uridine(34) in tRNA + AH2 + ATP = 2-thiouridine(34) in tRNA + L-cysteinyl-[protein] + A + AMP + diphosphate + H(+). In terms of biological role, catalyzes the 2-thiolation of uridine at the wobble position (U34) of tRNA, leading to the formation of s(2)U34. The chain is tRNA-specific 2-thiouridylase MnmA from Helicobacter pylori (strain G27).